Reading from the N-terminus, the 151-residue chain is Large ribosomal subunit protein uL15 (151 aa).

The tract at residues 1-60 is disordered; sequence MAENSPLKAHNLRPAPGAKTAKTRVGRGEASKGKTAGRGTKGTKARYQVPERFEGGQMPL.

Belongs to the universal ribosomal protein uL15 family. Part of the 50S ribosomal subunit.

Functionally, binds to the 23S rRNA. The polypeptide is Large ribosomal subunit protein uL15 (Streptomyces griseus subsp. griseus (strain JCM 4626 / CBS 651.72 / NBRC 13350 / KCC S-0626 / ISP 5235)).